Consider the following 571-residue polypeptide: Urease subunit alpha (571 aa).

The 439-residue stretch at 133-571 (AGIDTHIHFI…VALNQRYFFS (439 aa)) folds into the Urease domain. Positions 138, 140, and 221 each coordinate Ni(2+). Lysine 221 carries the N6-carboxylysine modification. A substrate-binding site is contributed by histidine 223. 2 residues coordinate Ni(2+): histidine 250 and histidine 276. Histidine 324 serves as the catalytic Proton donor. Aspartate 364 lines the Ni(2+) pocket.

This sequence belongs to the metallo-dependent hydrolases superfamily. Urease alpha subunit family. In terms of assembly, heterotrimer of UreA (gamma), UreB (beta) and UreC (alpha) subunits. Three heterotrimers associate to form the active enzyme. It depends on Ni cation as a cofactor. Carboxylation allows a single lysine to coordinate two nickel ions.

It is found in the cytoplasm. It carries out the reaction urea + 2 H2O + H(+) = hydrogencarbonate + 2 NH4(+). It functions in the pathway nitrogen metabolism; urea degradation; CO(2) and NH(3) from urea (urease route): step 1/1. The protein is Urease subunit alpha of Photorhabdus laumondii subsp. laumondii (strain DSM 15139 / CIP 105565 / TT01) (Photorhabdus luminescens subsp. laumondii).